The sequence spans 695 residues: Elongation factor G (695 aa).

One can recognise a tr-type G domain in the interval 10 to 289; the sequence is KNLRNIGIMA…AVVAWMPSPL (280 aa). GTP contacts are provided by residues 19-26, 83-87, and 137-140; these read AHIDAGKT, DTPGH, and NKMD.

The protein belongs to the TRAFAC class translation factor GTPase superfamily. Classic translation factor GTPase family. EF-G/EF-2 subfamily.

The protein localises to the cytoplasm. Its function is as follows. Catalyzes the GTP-dependent ribosomal translocation step during translation elongation. During this step, the ribosome changes from the pre-translocational (PRE) to the post-translocational (POST) state as the newly formed A-site-bound peptidyl-tRNA and P-site-bound deacylated tRNA move to the P and E sites, respectively. Catalyzes the coordinated movement of the two tRNA molecules, the mRNA and conformational changes in the ribosome. This chain is Elongation factor G, found in Protochlamydia amoebophila (strain UWE25).